Consider the following 120-residue polypeptide: Immunoglobulin kappa variable 2D-29 (120 aa).

The N-terminal stretch at 1–20 is a signal peptide; that stretch reads MRLPAQLLGLLMLWIPGSSA. The interval 21–43 is framework-1; it reads DIVMTQTPLSLSVTPGQPASISC. Residues 21–120 enclose the Ig-like domain; it reads DIVMTQTPLS…YYCMQSIQLP (100 aa). The cysteines at positions 43 and 113 are disulfide-linked. The complementarity-determining-1 stretch occupies residues 44-59; sequence KSSQSLLHSDGKTYLY. Residues 60 to 74 are framework-2; that stretch reads WYLQKPGQPPQLLIY. Residues 75-81 are complementarity-determining-2; it reads EVSNRFS. Residues 82–113 are framework-3; the sequence is GVPDRFSGSGSGTDFTLKISRVEAEDVGVYYC. The tract at residues 114–120 is complementarity-determining-3; the sequence is MQSIQLP.

As to quaternary structure, immunoglobulins are composed of two identical heavy chains and two identical light chains; disulfide-linked.

It localises to the secreted. The protein localises to the cell membrane. Its function is as follows. V region of the variable domain of immunoglobulin light chains that participates in the antigen recognition. Immunoglobulins, also known as antibodies, are membrane-bound or secreted glycoproteins produced by B lymphocytes. In the recognition phase of humoral immunity, the membrane-bound immunoglobulins serve as receptors which, upon binding of a specific antigen, trigger the clonal expansion and differentiation of B lymphocytes into immunoglobulins-secreting plasma cells. Secreted immunoglobulins mediate the effector phase of humoral immunity, which results in the elimination of bound antigens. The antigen binding site is formed by the variable domain of one heavy chain, together with that of its associated light chain. Thus, each immunoglobulin has two antigen binding sites with remarkable affinity for a particular antigen. The variable domains are assembled by a process called V-(D)-J rearrangement and can then be subjected to somatic hypermutations which, after exposure to antigen and selection, allow affinity maturation for a particular antigen. The polypeptide is Immunoglobulin kappa variable 2D-29 (Homo sapiens (Human)).